Here is a 525-residue protein sequence, read N- to C-terminus: Nucleolar complex protein 4 homolog B (525 aa).

Positions 1 to 10 (MAARKAKHAF) are enriched in basic residues. Residues 1–21 (MAARKAKHAFRSQATQSDAER) are disordered. Transmembrane regions (helical) follow at residues 307–327 (AAYD…FILI), 358–378 (FFHL…LVAA), and 386–406 (LALT…CNLI).

It belongs to the CBF/MAK21 family.

It localises to the nucleus membrane. It is found in the nucleus. Its subcellular location is the nucleolus. The sequence is that of Nucleolar complex protein 4 homolog B (noc4l-b) from Xenopus laevis (African clawed frog).